Consider the following 329-residue polypeptide: 4-hydroxythreonine-4-phosphate dehydrogenase (329 aa).

The substrate site is built by His136 and Thr137. A divalent metal cation contacts are provided by His166, His211, and His266. 3 residues coordinate substrate: Lys274, Asn283, and Arg292.

The protein belongs to the PdxA family. As to quaternary structure, homodimer. Zn(2+) serves as cofactor. Requires Mg(2+) as cofactor. The cofactor is Co(2+).

The protein resides in the cytoplasm. The enzyme catalyses 4-(phosphooxy)-L-threonine + NAD(+) = 3-amino-2-oxopropyl phosphate + CO2 + NADH. It participates in cofactor biosynthesis; pyridoxine 5'-phosphate biosynthesis; pyridoxine 5'-phosphate from D-erythrose 4-phosphate: step 4/5. Functionally, catalyzes the NAD(P)-dependent oxidation of 4-(phosphooxy)-L-threonine (HTP) into 2-amino-3-oxo-4-(phosphooxy)butyric acid which spontaneously decarboxylates to form 3-amino-2-oxopropyl phosphate (AHAP). This chain is 4-hydroxythreonine-4-phosphate dehydrogenase, found in Pseudomonas putida (strain ATCC 47054 / DSM 6125 / CFBP 8728 / NCIMB 11950 / KT2440).